We begin with the raw amino-acid sequence, 185 residues long: Large ribosomal subunit protein uL5 (185 aa).

The protein belongs to the universal ribosomal protein uL5 family. As to quaternary structure, part of the 50S ribosomal subunit; part of the 5S rRNA/L5/L18/L25 subcomplex. Contacts the 5S rRNA and the P site tRNA. Forms a bridge to the 30S subunit in the 70S ribosome.

Functionally, this is one of the proteins that bind and probably mediate the attachment of the 5S RNA into the large ribosomal subunit, where it forms part of the central protuberance. In the 70S ribosome it contacts protein S13 of the 30S subunit (bridge B1b), connecting the 2 subunits; this bridge is implicated in subunit movement. Contacts the P site tRNA; the 5S rRNA and some of its associated proteins might help stabilize positioning of ribosome-bound tRNAs. In Streptomyces coelicolor (strain ATCC BAA-471 / A3(2) / M145), this protein is Large ribosomal subunit protein uL5.